A 367-amino-acid chain; its full sequence is Biotin synthase (367 aa).

Positions 67–291 (NAVQISTLLS…IAVTRICCPS (225 aa)) constitute a Radical SAM core domain. Cys-82, Cys-86, and Cys-89 together coordinate [4Fe-4S] cluster. [2Fe-2S] cluster contacts are provided by Cys-128, Cys-159, Cys-219, and Arg-295.

The protein belongs to the radical SAM superfamily. Biotin synthase family. Homodimer. The cofactor is [4Fe-4S] cluster. Requires [2Fe-2S] cluster as cofactor.

The catalysed reaction is (4R,5S)-dethiobiotin + (sulfur carrier)-SH + 2 reduced [2Fe-2S]-[ferredoxin] + 2 S-adenosyl-L-methionine = (sulfur carrier)-H + biotin + 2 5'-deoxyadenosine + 2 L-methionine + 2 oxidized [2Fe-2S]-[ferredoxin]. It participates in cofactor biosynthesis; biotin biosynthesis; biotin from 7,8-diaminononanoate: step 2/2. Functionally, catalyzes the conversion of dethiobiotin (DTB) to biotin by the insertion of a sulfur atom into dethiobiotin via a radical-based mechanism. The chain is Biotin synthase from Psychrobacter sp. (strain PRwf-1).